The following is a 498-amino-acid chain: Transcription factor kayak (498 aa).

Polar residues predominate over residues 108 to 127 (ASLGQGSESEDSNASYNDTQ). Disordered stretches follow at residues 108–144 (ASLGQGSESEDSNASYNDTQMNEEQDTTDTSSAHTDS) and 177–234 (GSAS…KRRV). 2 stretches are compositionally biased toward low complexity: residues 135–144 (TDTSSAHTDS) and 177–191 (GSASVGSSNANTSNT). The bZIP domain occupies 212 to 275 (EQKRAVRRER…KQLEYLLATH (64 aa)). A basic motif region spans residues 214–233 (KRAVRRERNKQAAARCRKRR). Positions 240–247 (LTEEVEQL) are leucine-zipper. Residues 304-325 (AGSSGSGASSHHNHNSNDSSNG) show a composition bias toward low complexity. Disordered stretches follow at residues 304-345 (AGSS…SPLD) and 465-498 (TPVSGPLVPNSSSTNKHPLELPTPTAEPSKLVSL). Polar residues predominate over residues 333-343 (TLNSTGRSNSP). Position 342 is a phosphoserine (S342).

It belongs to the bZIP family. Fos subfamily. As to quaternary structure, homodimer. Heterodimer with Jra. The kay-Jra heterodimer binds more stably to the AP-1 site than either of the two proteins alone.

It localises to the nucleus. In terms of biological role, developmentally regulated transcription factor AP-1 binds and recognizes the enhancer DNA sequence: 5'-TGA[CG]TCA-3'. May play a role in the function or determination of a particular subset of cells in the developing embryo. It is able to carry out its function either independently of or in conjunction with Jra. This chain is Transcription factor kayak, found in Drosophila simulans (Fruit fly).